A 93-amino-acid chain; its full sequence is Small integral membrane protein 36 (93 aa).

Residues Leu14–Leu34 traverse the membrane as a helical segment. A disordered region spans residues Ser70–Val93.

Its subcellular location is the membrane. In Mus musculus (Mouse), this protein is Small integral membrane protein 36.